A 548-amino-acid polypeptide reads, in one-letter code: CTP synthase (548 aa).

Residues 1-267 (MKTKFIFITG…DQKIAIMLQL (267 aa)) form an amidoligase domain region. S14 serves as a coordination point for CTP. Residue S14 coordinates UTP. Residues 15 to 20 (SLGKGL) and D72 each bind ATP. 2 residues coordinate Mg(2+): D72 and E141. Residues 148–150 (DIE), 188–193 (KTKPTQ), and K224 contribute to the CTP site. UTP contacts are provided by residues 188–193 (KTKPTQ) and K224. Residues 292–545 (TIGIVGKYVD…IKAAGKQAVK (254 aa)) enclose the Glutamine amidotransferase type-1 domain. G354 is an L-glutamine binding site. The active-site Nucleophile; for glutamine hydrolysis is C381. Residues 382–385 (LGMQ), E405, and R473 each bind L-glutamine. Catalysis depends on residues H518 and E520.

This sequence belongs to the CTP synthase family. Homotetramer.

The enzyme catalyses UTP + L-glutamine + ATP + H2O = CTP + L-glutamate + ADP + phosphate + 2 H(+). The catalysed reaction is L-glutamine + H2O = L-glutamate + NH4(+). It carries out the reaction UTP + NH4(+) + ATP = CTP + ADP + phosphate + 2 H(+). It participates in pyrimidine metabolism; CTP biosynthesis via de novo pathway; CTP from UDP: step 2/2. Allosterically activated by GTP, when glutamine is the substrate; GTP has no effect on the reaction when ammonia is the substrate. The allosteric effector GTP functions by stabilizing the protein conformation that binds the tetrahedral intermediate(s) formed during glutamine hydrolysis. Inhibited by the product CTP, via allosteric rather than competitive inhibition. Catalyzes the ATP-dependent amination of UTP to CTP with either L-glutamine or ammonia as the source of nitrogen. Regulates intracellular CTP levels through interactions with the four ribonucleotide triphosphates. The sequence is that of CTP synthase from Oleidesulfovibrio alaskensis (strain ATCC BAA-1058 / DSM 17464 / G20) (Desulfovibrio alaskensis).